Here is a 456-residue protein sequence, read N- to C-terminus: Ammonium transporter Amt2 (456 aa).

The next 11 membrane-spanning stretches (helical) occupy residues 18–38 (LVWVLTVTFLIFFMHAGFAML), 61–81 (IGVIVFFLLGAAVSAIVAGLT), 109–129 (WLFGAVFAMTAATIVSGAVAG), 141–161 (ILIAGVIYPVVVGVTWAGGFL), 170–190 (AGGMIVHGMGGIAGLTAAWII), 211–231 (ITFAVLGTLILAFGWYGFNVG), 255–275 (VALVTTLGMAAGALGAGGVAF), 281–301 (VDTLYVANGVLAGLVGITAIA), 304–324 (IVWPGALVVGLLAGAQLPIVF), 339–359 (VFPVHGSAGVLGTLLYPVFAV), and 377–397 (VGVGVIAVWTFVATTAIFGGF).

Belongs to the ammonia transporter channel (TC 1.A.11.2) family. In terms of assembly, homotrimer. Interacts with both GlnK1 and GlnK2 after ammonium shock.

The protein localises to the cell membrane. Its function is as follows. Involved in the uptake of ammonium/ammonia (NH(4)(+)/NH(3)). Transport is electrogenic. The sequence is that of Ammonium transporter Amt2 from Haloferax mediterranei (strain ATCC 33500 / DSM 1411 / JCM 8866 / NBRC 14739 / NCIMB 2177 / R-4) (Halobacterium mediterranei).